The sequence spans 555 residues: L-ascorbate oxidase homolog (555 aa).

The signal sequence occupies residues 1-23; the sequence is MRGVKLLAACLYLAAAATVVVHA. 2 Plastocyanin-like domains span residues 25-145 and 158-301; these read DPYF…LRVN and EDDY…RYEG. N-linked (GlcNAc...) asparagine glycans are attached at residues asparagine 33, asparagine 61, and asparagine 110. Cysteine 103 and cysteine 539 form a disulfide bridge. 3 N-linked (GlcNAc...) asparagine glycosylation sites follow: asparagine 330, asparagine 350, and asparagine 422. In terms of domain architecture, Plastocyanin-like 3 spans 345 to 524; sequence HYGKINITRT…LYASVLSPEK (180 aa).

Belongs to the multicopper oxidase family. In terms of tissue distribution, maximal expression in early binucleate microspores; declines considerably in mature trinucleate pollen.

It localises to the secreted. Its function is as follows. Probable oxidase that may be involved in pollen tube growth. In Brassica napus (Rape), this protein is L-ascorbate oxidase homolog (Bp10).